Here is a 1132-residue protein sequence, read N- to C-terminus: DNA-directed RNA polymerase I subunit RPA2 (1132 aa).

The C4-type zinc finger occupies 1067–1098; sequence CMDCGSLLSPLLEKPPPNWSATRHRKTICLLC.

This sequence belongs to the RNA polymerase beta chain family. Component of the RNA polymerase I (Pol I) complex consisting of at least 13 subunits.

It is found in the nucleus. It localises to the nucleolus. Its subcellular location is the chromosome. It catalyses the reaction RNA(n) + a ribonucleoside 5'-triphosphate = RNA(n+1) + diphosphate. Its function is as follows. DNA-dependent RNA polymerase catalyzes the transcription of DNA into RNA using the four ribonucleoside triphosphates as substrates. Second largest core component of RNA polymerase I which synthesizes ribosomal RNA precursors. Proposed to contribute to the polymerase catalytic activity and forms the polymerase active center together with the largest subunit. Pol I is composed of mobile elements and RPA2 is part of the core element with the central large cleft and probably a clamp element that moves to open and close the cleft. This Danio rerio (Zebrafish) protein is DNA-directed RNA polymerase I subunit RPA2 (polr1b).